The primary structure comprises 580 residues: Probable inactive 1-aminocyclopropane-1-carboxylate synthase-like protein 2 (580 aa).

The segment at 1–43 (MSENRNEGSSQAAKANSDTQTPSHFKVTHPRLRDQLKKKSSKK) is disordered. The segment covering 7 to 23 (EGSSQAAKANSDTQTPS) has biased composition (polar residues). Lysine 417 carries the post-translational modification N6-(pyridoxal phosphate)lysine.

It belongs to the class-I pyridoxal-phosphate-dependent aminotransferase family.

The chain is Probable inactive 1-aminocyclopropane-1-carboxylate synthase-like protein 2 (Accsl) from Mus musculus (Mouse).